We begin with the raw amino-acid sequence, 306 residues long: D-alanine--D-alanine ligase (306 aa).

Residues glutamate 15 and serine 150 contribute to the active site. The ATP-grasp domain maps to 101-303; that stretch reads KLLWKSLSLR…FDELILKILK (203 aa). 134-189 lines the ATP pocket; that stretch reads ILKLKFPVVIKPNNAGSSIGITIVNHPDLLIDSINLAFNYSNNIIIEKFLKGTEYT. Residues aspartate 257, glutamate 270, and asparagine 272 each contribute to the Mg(2+) site. Serine 281 is a catalytic residue.

It belongs to the D-alanine--D-alanine ligase family. Mg(2+) is required as a cofactor. Requires Mn(2+) as cofactor.

Its subcellular location is the cytoplasm. It carries out the reaction 2 D-alanine + ATP = D-alanyl-D-alanine + ADP + phosphate + H(+). Its pathway is cell wall biogenesis; peptidoglycan biosynthesis. In terms of biological role, cell wall formation. The protein is D-alanine--D-alanine ligase of Buchnera aphidicola subsp. Schizaphis graminum (strain Sg).